We begin with the raw amino-acid sequence, 565 residues long: Sulfite reductase [NADPH] hemoprotein beta-component (565 aa).

4 residues coordinate [4Fe-4S] cluster: C429, C435, C474, and C478. C478 provides a ligand contact to siroheme.

Belongs to the nitrite and sulfite reductase 4Fe-4S domain family. Alpha(8)-beta(8). The alpha component is a flavoprotein, the beta component is a hemoprotein. Requires siroheme as cofactor. [4Fe-4S] cluster is required as a cofactor.

The catalysed reaction is hydrogen sulfide + 3 NADP(+) + 3 H2O = sulfite + 3 NADPH + 4 H(+). The protein operates within sulfur metabolism; hydrogen sulfide biosynthesis; hydrogen sulfide from sulfite (NADPH route): step 1/1. Its function is as follows. Component of the sulfite reductase complex that catalyzes the 6-electron reduction of sulfite to sulfide. This is one of several activities required for the biosynthesis of L-cysteine from sulfate. The chain is Sulfite reductase [NADPH] hemoprotein beta-component from Shewanella baltica (strain OS185).